The primary structure comprises 3354 residues: Cadherin-23 (3354 aa).

An N-terminal signal peptide occupies residues 1 to 23; sequence MRYSLVTCYAVLWLLMLVPGSWG. Residues 24–3064 are Extracellular-facing; that stretch reads QVNRLPFFTN…SVQLPDDMSA (3041 aa). 27 consecutive Cadherin domains span residues 34-132, 133-236, 237-348, 349-460, 461-561, 562-671, 672-784, 779-890, 891-995, 996-1102, 1103-1208, 1210-1313, 1314-1418, 1420-1527, 1529-1634, 1635-1744, 1745-1851, 1852-1959, 1960-2069, 2070-2174, 2175-2293, 2297-2402, 2403-2509, 2510-2611, 2614-2722, 2729-2846, and 2847-2975; these read HFFD…APTF, HNQP…DPIF, INLP…APEF, NSSE…RPIF, SQPL…VPTF, QKDA…PPTF, SKPA…APYY, KDAP…DPTF, RNLP…TPTF, FPAV…RPIF, LQSS…APVF, QQQY…AVQF, SNAS…SPRF, FTSD…PPVI, SPFG…APVF, QQPH…VPTF, PRDY…DPVL, LNLP…HPLF, TEGT…WPTF, SPPT…RPEF, LNPI…TPQF, GITY…NPIF, DQPS…RPQF, SKPQ…RPVF, PPNG…EPLF, SPQY…PPRF, and TKAE…EEEF. Residues asparagine 155 and asparagine 206 are each glycosylated (N-linked (GlcNAc...) asparagine). Asparagine 349, asparagine 393, asparagine 434, asparagine 466, asparagine 472, asparagine 602, asparagine 694, asparagine 765, asparagine 810, asparagine 827, asparagine 941, asparagine 1001, asparagine 1018, asparagine 1171, asparagine 1282, asparagine 1315, asparagine 1473, asparagine 1534, asparagine 1651, asparagine 1667, asparagine 1818, asparagine 1857, asparagine 1889, asparagine 1902, asparagine 2014, asparagine 2050, asparagine 2129, asparagine 2168, asparagine 2195, asparagine 2263, asparagine 2357, and asparagine 2369 each carry an N-linked (GlcNAc...) asparagine glycan. N-linked (GlcNAc...) asparagine glycans are attached at residues asparagine 2578, asparagine 2616, asparagine 2749, asparagine 2808, asparagine 2877, asparagine 2896, asparagine 2941, and asparagine 2981. A helical transmembrane segment spans residues 3065-3085; sequence LQMAIIVLAILLFLAAMLFVL. The Cytoplasmic portion of the chain corresponds to 3086 to 3354; sequence MNWYYRTIHK…MESPLEITEL (269 aa).

In terms of assembly, interacts with USH1C and USH1G. antiparallel heterodimer with PCDH15. Isoform C1: Interacts with CAMSAP3; leading to inhibit CAMSAP3 ability to induce microtubule bundle formation. As to expression, in adult animals relatively high levels of expression are found in testis, skeletal muscle, heart, eye and thymus, and lower expression in kidney, lung and brain. Found in the sensory hair cells of the inner ear.

The protein localises to the cell membrane. In terms of biological role, cadherins are calcium-dependent cell adhesion proteins. They preferentially interact with themselves in a homophilic manner in connecting cells. CDH23 is required for establishing and/or maintaining the proper organization of the stereocilia bundle of hair cells in the cochlea and the vestibule during late embryonic/early postnatal development. It is part of the functional network formed by USH1C, USH1G, CDH23 and MYO7A that mediates mechanotransduction in cochlear hair cells. Required for normal hearing. This chain is Cadherin-23 (Cdh23), found in Mus musculus (Mouse).